The primary structure comprises 427 residues: Glutamate-1-semialdehyde 2,1-aminomutase (427 aa).

K264 bears the N6-(pyridoxal phosphate)lysine mark.

It belongs to the class-III pyridoxal-phosphate-dependent aminotransferase family. HemL subfamily. Homodimer. The cofactor is pyridoxal 5'-phosphate.

It localises to the cytoplasm. The catalysed reaction is (S)-4-amino-5-oxopentanoate = 5-aminolevulinate. Its pathway is porphyrin-containing compound metabolism; protoporphyrin-IX biosynthesis; 5-aminolevulinate from L-glutamyl-tRNA(Glu): step 2/2. In Clostridium botulinum (strain Alaska E43 / Type E3), this protein is Glutamate-1-semialdehyde 2,1-aminomutase.